Reading from the N-terminus, the 360-residue chain is Mannonate dehydratase (360 aa).

Belongs to the mannonate dehydratase family. The cofactor is Fe(2+). Mn(2+) is required as a cofactor.

The enzyme catalyses D-mannonate = 2-dehydro-3-deoxy-D-gluconate + H2O. The protein operates within carbohydrate metabolism; pentose and glucuronate interconversion. Its function is as follows. Catalyzes the dehydration of D-mannonate. This is Mannonate dehydratase (uxuA) from Thermotoga neapolitana.